Consider the following 147-residue polypeptide: uncharacterized protein (147 aa).

Disordered regions lie at residues 1–49 (MRTP…NLNE) and 125–147 (SPSP…RKSN). 2 stretches are compositionally biased toward low complexity: residues 8-49 (NNNY…NLNE) and 125-140 (SPSP…PQNT).

This is an uncharacterized protein from Dictyostelium discoideum (Social amoeba).